The chain runs to 427 residues: MPALVLIGAQWGDEGKGKATDLLGGAVDYVVRYQGGNNAGHTVVIGEERYALHLIPSGILRADCVPVIGNGVVIDPGVLLTEMDGLAARGIDVSRLLISANAHLIMPHHRALDRVTERYLGKARIGTTGRGIGPTYGDKVARTGIRVQDLLDPGIFRKKLELALREKNQVLAKVYNRRRIEVDEVVEEYAAYAERLGPHIADTGLVLDRALREGKVVLLEGSQGTLLDVDHGSYPFVTSSNPTAGYAATGAGIGPTRINRVVGIIKAYTTRVGAGPFPTELDDKVGEELRRIGGEFGVTTGRARRTGWFDAVIARYAVRVNGLTDLFLTKLDVLSGFDRVPICVGYDIGGERVDEMPMTQTEFHHARPIYTELPGWQEDLSDVRKYADLPAAAKDYIRTLEELSGAPVSAIGVGPGRDQTLVINDLV.

GTP-binding positions include 12-18 and 40-42; these read GDEGKGK and GHT. The Proton acceptor role is filled by Asp-13. Mg(2+)-binding residues include Asp-13 and Gly-40. IMP-binding positions include 13 to 16, 38 to 41, Thr-128, Arg-142, Gln-223, Thr-238, and Arg-302; these read DEGK and NAGH. His-41 acts as the Proton donor in catalysis. Substrate is bound at residue 298–304; sequence VTTGRAR. Residues Arg-304, 330 to 332, and 412 to 414 contribute to the GTP site; these read KLD and GVG.

This sequence belongs to the adenylosuccinate synthetase family. In terms of assembly, homodimer. It depends on Mg(2+) as a cofactor.

It localises to the cytoplasm. It catalyses the reaction IMP + L-aspartate + GTP = N(6)-(1,2-dicarboxyethyl)-AMP + GDP + phosphate + 2 H(+). Its pathway is purine metabolism; AMP biosynthesis via de novo pathway; AMP from IMP: step 1/2. Plays an important role in the de novo pathway of purine nucleotide biosynthesis. Catalyzes the first committed step in the biosynthesis of AMP from IMP. This is Adenylosuccinate synthetase from Frankia alni (strain DSM 45986 / CECT 9034 / ACN14a).